The sequence spans 347 residues: tRNA N6-adenosine threonylcarbamoyltransferase (347 aa).

Positions 111 and 115 each coordinate Fe cation. Residues 134-138 (LVSGG), aspartate 167, glycine 180, and asparagine 277 each bind substrate. Aspartate 305 is a Fe cation binding site.

This sequence belongs to the KAE1 / TsaD family. The cofactor is Fe(2+).

The protein resides in the cytoplasm. The enzyme catalyses L-threonylcarbamoyladenylate + adenosine(37) in tRNA = N(6)-L-threonylcarbamoyladenosine(37) in tRNA + AMP + H(+). In terms of biological role, required for the formation of a threonylcarbamoyl group on adenosine at position 37 (t(6)A37) in tRNAs that read codons beginning with adenine. Is involved in the transfer of the threonylcarbamoyl moiety of threonylcarbamoyl-AMP (TC-AMP) to the N6 group of A37, together with TsaE and TsaB. TsaD likely plays a direct catalytic role in this reaction. The chain is tRNA N6-adenosine threonylcarbamoyltransferase from Ralstonia pickettii (strain 12J).